Consider the following 60-residue polypeptide: Large ribosomal subunit protein uL30 (60 aa).

Belongs to the universal ribosomal protein uL30 family. Part of the 50S ribosomal subunit.

The sequence is that of Large ribosomal subunit protein uL30 from Verminephrobacter eiseniae (strain EF01-2).